We begin with the raw amino-acid sequence, 827 residues long: MMEGLKKRTRKAFGIRKKEKDTDSTGSPDRDGMQPSPHEPPYHSKAECAREGGKKASKKSNGAPNGFYAEIDWERYNSPELDEEGYSIRPEEPGSTKGKHFYSSSESEEEEESHKKFNIKIKPLQSKDVLKNAATVDELKASIGNIALSPSPVRKSPRRSPGAIKRNLSSEEVARPRRSTPTPELTSKKPLDDTLALAPLFGPPLESAFDEQKTEVLLDQPEIWGSGQPINPSMESPKLARPFPTGTPPPLPPKAVPATPPRTGSPLTVATGNDQAATEAKIEKLPSISDLDSIFGPVLSPKSVAVNTEEKWVHFSDASPEHVTPELTPREKVVTPPAASDIPADSPAPGPPGPPGSAGPPGPPGPRHVPSPLNLEEVQKKVAEQTFIKDDYLETLSSPKECGLGQRATPPPPPPPTYRTVVSSPGPGSGSGTGTASGASSPARPATPLVPCSSTTPPPPPPRPPSRPKLPPGKPGVGDVSRPFSPPIHSSSPPPIAPLARAESTSSISSTNSLSAATTPTVENEQPSLVWFDRGKFYLTFEGSSRGPSPLTMGAQDTLPVAAAFTETVNAYFKGADPSKCIVKITGEMVLSFPAGITRHFANNPSPAALTFRVINSSRLEHVLPNPQLLCCDNTQNDANTKEFWVNMPNLMTHLKKVSEQKPQATYYNVDMLKYQVSAQGIQSTPLNLAVNWRCEPGSTDLRIDYKYNTDAMTTAVALNNVQFLVPIDGGVTKLQAVLPPAVWNAEQQRILWKIPDISQKSENGGVGSLLARFQLSEGPSKPSPLVVQFTSEGSTLSGCDIELVGAGYRFSLIKKRFAAGKYLADN.

3 disordered regions span residues 1-115 (MMEG…ESHK), 142-205 (SIGN…GPPL), and 223-278 (IWGS…QAAT). Composition is skewed to basic and acidic residues over residues 16–32 (RKKE…DRDG) and 40–54 (PPYH…EGGK). Residues serine 78, serine 104, serine 105, serine 107, serine 149, serine 151, serine 156, and serine 169 each carry the phosphoserine modification. A phosphothreonine mark is found at threonine 180 and threonine 182. Serine 236 is subject to Phosphoserine. Pro residues predominate over residues 245–260 (TGTPPPLPPKAVPATP). Phosphothreonine is present on residues threonine 247 and threonine 259. Serine 265, serine 287, serine 289, serine 300, serine 316, and serine 319 each carry phosphoserine. A compositionally biased stretch (polar residues) spans 265–276 (SPLTVATGNDQA). The span at 314-333 (HFSDASPEHVTPELTPREKV) shows a compositional bias: basic and acidic residues. A disordered region spans residues 314-523 (HFSDASPEHV…LSAATTPTVE (210 aa)). Residues threonine 324, threonine 328, and threonine 335 each carry the phosphothreonine modification. Over residues 336 to 345 (PPAASDIPAD) the composition is skewed to low complexity. Over residues 346 to 369 (SPAPGPPGPPGSAGPPGPPGPRHV) the composition is skewed to pro residues. A Phosphoserine modification is found at serine 371. Basic and acidic residues predominate over residues 377-392 (EVQKKVAEQTFIKDDY). Serine 398 carries the phosphoserine modification. Threonine 409 carries the phosphothreonine modification. The segment covering 436–455 (ASGASSPARPATPLVPCSST) has biased composition (low complexity). A compositionally biased stretch (pro residues) spans 456-474 (TPPPPPPRPPSRPKLPPGK). Composition is skewed to low complexity over residues 481–491 (SRPFSPPIHSS) and 498–521 (PLAR…TTPT). The residue at position 485 (serine 485) is a Phosphoserine. The 269-residue stretch at 558-826 (TLPVAAAFTE…RFAAGKYLAD (269 aa)) folds into the MHD domain. Interaction with DPF motifs-containing proteins regions lie at residues 560–566 (PVAAAFT), 592–594 (SFP), 666–669 (TYYN), and 812–817 (SLIKKR). The tract at residues 648–827 (MPNLMTHLKK…FAAGKYLADN (180 aa)) is necessary and sufficient to mediate interaction with CANX.

In terms of assembly, interacts with proteins essential or regulating the formation of functional clathrin-coated pits. Interacts with CANX. Interacts with AP2A1. Interacts with EPS15. Interacts with SH3GL3. Interacts with AMPH. Interacts with ITSN1 (via SH3 domains). Interacts with and REPS1. Specifically expressed in brain (at protein level).

It is found in the membrane. The protein resides in the clathrin-coated pit. Its function is as follows. May function in clathrin-mediated endocytosis. Has both a membrane binding/tubulating activity and the ability to recruit proteins essential to the formation of functional clathrin-coated pits. Has a preference for membranes enriched in phosphatidylserine and phosphoinositides and is required for the endocytosis of the transferrin receptor. May also bind tubulin. May play a role in the regulation of energy homeostasis. The sequence is that of SH3-containing GRB2-like protein 3-interacting protein 1 (Sgip1) from Rattus norvegicus (Rat).